We begin with the raw amino-acid sequence, 275 residues long: Ribosomal RNA small subunit methyltransferase A (275 aa).

S-adenosyl-L-methionine contacts are provided by Asn-28, Leu-30, Gly-55, Glu-77, Asp-103, and Asn-123.

It belongs to the class I-like SAM-binding methyltransferase superfamily. rRNA adenine N(6)-methyltransferase family. RsmA subfamily.

It is found in the cytoplasm. It carries out the reaction adenosine(1518)/adenosine(1519) in 16S rRNA + 4 S-adenosyl-L-methionine = N(6)-dimethyladenosine(1518)/N(6)-dimethyladenosine(1519) in 16S rRNA + 4 S-adenosyl-L-homocysteine + 4 H(+). In terms of biological role, specifically dimethylates two adjacent adenosines (A1518 and A1519) in the loop of a conserved hairpin near the 3'-end of 16S rRNA in the 30S particle. May play a critical role in biogenesis of 30S subunits. This chain is Ribosomal RNA small subunit methyltransferase A, found in Rhizobium etli (strain CIAT 652).